The chain runs to 67 residues: Probable Sec-independent protein translocase protein TatE (67 aa).

The chain crosses the membrane as a helical span at residues 1 to 21 (MEGISIAKLLIIGALIVLLFG). Residues 46 to 67 (EDTSATRTTAEDVPAERVVHKD) form a disordered region.

The protein belongs to the TatA/E family. TatE subfamily.

The protein resides in the cell inner membrane. In terms of biological role, part of the twin-arginine translocation (Tat) system that transports large folded proteins containing a characteristic twin-arginine motif in their signal peptide across membranes. TatE shares overlapping functions with TatA. In Pantoea vagans (strain C9-1) (Pantoea agglomerans (strain C9-1)), this protein is Probable Sec-independent protein translocase protein TatE.